The chain runs to 140 residues: Ribonuclease P protein component (140 aa).

A disordered region spans residues 33 to 54 (RALKPSSAKKSSLDTAAKTQPA).

It belongs to the RnpA family. As to quaternary structure, consists of a catalytic RNA component (M1 or rnpB) and a protein subunit.

The catalysed reaction is Endonucleolytic cleavage of RNA, removing 5'-extranucleotides from tRNA precursor.. In terms of biological role, RNaseP catalyzes the removal of the 5'-leader sequence from pre-tRNA to produce the mature 5'-terminus. It can also cleave other RNA substrates such as 4.5S RNA. The protein component plays an auxiliary but essential role in vivo by binding to the 5'-leader sequence and broadening the substrate specificity of the ribozyme. In Trichormus variabilis (strain ATCC 29413 / PCC 7937) (Anabaena variabilis), this protein is Ribonuclease P protein component.